The sequence spans 413 residues: MQKRVVILLLDSFGIGASEDARDFGDLGANTLGNIAKACFNNLADSNDRNGALKLPYLESLGLGLSALKATNELPLGFESKPNLIGAYAYAQELSSAKDTISGHWEMMGAPVLFEWGYFKDKNNSFPKEILDEIMRKTKIKGYLGNCHASGTEIIKDLGEKHLETLYPIFYTSADSVFQIVAHEEKFGLDNLYALCEEAFQILEPLKIARVIARPFIGANREDFKRTAHRKDYAIKPHKKLLFEKFIEEKQGEVISIGKIADIYAHVGITQKFKAGSLMELCDVTLEQIKNAKNNSLIFTNFVHFDSDYGHRRDISGYANALEYFDARLKEVLENLRENDLLILCADHGCDPSFKGTDHTREYIPVLFYHKDLQPAFLGKSESFADIGQSIAYFLGLSPLDYGKNLLNFKGQS.

Residues aspartate 11, aspartate 306, histidine 311, aspartate 347, histidine 348, and histidine 359 each contribute to the Mn(2+) site.

This sequence belongs to the phosphopentomutase family. Requires Mn(2+) as cofactor.

The protein resides in the cytoplasm. The catalysed reaction is 2-deoxy-alpha-D-ribose 1-phosphate = 2-deoxy-D-ribose 5-phosphate. It carries out the reaction alpha-D-ribose 1-phosphate = D-ribose 5-phosphate. The protein operates within carbohydrate degradation; 2-deoxy-D-ribose 1-phosphate degradation; D-glyceraldehyde 3-phosphate and acetaldehyde from 2-deoxy-alpha-D-ribose 1-phosphate: step 1/2. In terms of biological role, isomerase that catalyzes the conversion of deoxy-ribose 1-phosphate (dRib-1-P) and ribose 1-phosphate (Rib-1-P) to deoxy-ribose 5-phosphate (dRib-5-P) and ribose 5-phosphate (Rib-5-P), respectively. This chain is Phosphopentomutase, found in Helicobacter pylori (strain Shi470).